The sequence spans 352 residues: Speedy protein E18 (352 aa).

Residues 1 to 12 (MDRTKTRFRKRG) show a composition bias toward basic residues. Residues 1–90 (MDRTKTRFRK…EPEKELAPEP (90 aa)) are disordered. The segment covering 16–39 (GKITTSRQPHPQNEQSLQRSTSGY) has biased composition (polar residues). Acidic residues predominate over residues 76 to 90 (DESEEEPEKELAPEP).

The protein belongs to the Speedy/Ringo family.

In Homo sapiens (Human), this protein is Speedy protein E18.